The primary structure comprises 961 residues: Leucine-rich repeat-containing protein egg-6 (961 aa).

The signal sequence occupies residues 1–18 (MRWLTLIAVAHLIAFLSS). Residues 19 to 854 (AEITCPRIPE…EQNERHRNIR (836 aa)) lie on the Extracellular side of the membrane. 17 LRR repeats span residues 60 to 78 (IDEL…SLPF), 79 to 101 (NGLR…AWRH), 103 to 124 (EATI…VFGN), 125 to 148 (LSTL…AFNG), 150 to 172 (SALT…SLDA), 174 to 197 (KASL…ILRN), 199 to 222 (ANLM…LMNL), 223 to 245 (PFLR…AFMN), 247 to 269 (PQLQ…RLQG), 270 to 294 (FKNL…DLPN), 305 to 316 (ITKIETLAFSNN), 317 to 339 (PNLQ…SFES), 340 to 363 (LDKL…MFDG), 364 to 387 (MKNL…SFAQ), 388 to 411 (LAHL…TFDK), 413 to 435 (SKLF…VFKK), and 437 to 455 (ISNI…SFNE). A helical transmembrane segment spans residues 855 to 875 (IITAIALAFVGAVTVVVIIFF). Topologically, residues 876–961 (VNYTKKQRRL…PQAVSHRSRH (86 aa)) are cytoplasmic. Residues 890 to 943 (VYRSSPSSSGSSGQNAANESGRSSAAPSPIRPPLMNIPKTPNNRTMESTFGQPQ) are disordered. Over residues 893–902 (SSPSSSGSSG) the composition is skewed to low complexity. Polar residues predominate over residues 928 to 943 (KTPNNRTMESTFGQPQ).

In L1 larvae, expressed in a subset of epithelial cells including epidermal, vulval and rectal cells and the excretory duct and pore. Also detected in some neurons. Absent from internal epithelia such as the gut and pharyngeal tubes.

The protein localises to the apical cell membrane. In terms of biological role, required for apical extracellular matrix organization and epithelial junction maintenance. In Caenorhabditis elegans, this protein is Leucine-rich repeat-containing protein egg-6.